Consider the following 511-residue polypeptide: Lysine--tRNA ligase (511 aa).

Positions 421 and 428 each coordinate Mg(2+).

It belongs to the class-II aminoacyl-tRNA synthetase family. As to quaternary structure, homodimer. Mg(2+) is required as a cofactor.

Its subcellular location is the cytoplasm. It catalyses the reaction tRNA(Lys) + L-lysine + ATP = L-lysyl-tRNA(Lys) + AMP + diphosphate. In Janthinobacterium sp. (strain Marseille) (Minibacterium massiliensis), this protein is Lysine--tRNA ligase.